Reading from the N-terminus, the 188-residue chain is Accessory gene regulator protein B (188 aa).

Helical transmembrane passes span 49-69 (VALI…YFLV), 100-122 (VYFQ…LIIY), 143-163 (LLSI…PEPF), and 164-184 (KQLI…IFFP).

It belongs to the AgrB family.

Its subcellular location is the cell membrane. Its function is as follows. Essential for the production of a quorum sensing system signal molecule, the autoinducing peptide (AIP). This quorum sensing system is responsible for the regulation of the expression of virulence factor genes. Involved in the proteolytic processing of AgrD, the precursor of AIP. The chain is Accessory gene regulator protein B from Staphylococcus haemolyticus (strain JCSC1435).